A 159-amino-acid chain; its full sequence is Elicitor-responsive protein 1 (159 aa).

Residues methionine 1–glutamate 112 form the C2 domain. Positions 21 and 30 each coordinate Ca(2+). Serine 44 carries the phosphoserine; by CPK modification. Residues aspartate 81, aspartate 83, serine 86, and aspartate 89 each contribute to the Ca(2+) site.

It depends on Ca(2+) as a cofactor. Phosphorylated at Ser-44 by CPK18 in a calcium-dependent manner. In terms of tissue distribution, isoform 2 is expressed in young vascular tissues and tiller buds.

It is found in the cytoplasm. It localises to the cell membrane. In terms of biological role, may play a role in plant defense signaling. Isoform 2 binds to phospholipids in a Ca(2+)-dependent manner in response to pathogen elicitors. In Oryza sativa subsp. japonica (Rice), this protein is Elicitor-responsive protein 1 (ERG1).